A 335-amino-acid chain; its full sequence is Eukaryotic translation initiation factor 3 subunit I (335 aa).

WD repeat units follow at residues 8–47, 50–91, 145–184, 189–228, and 286–325; these read GHER…RLGT, GHQG…KVWD, CTES…QLEN, EFDN…ILKT, and GHFG…FDFM.

It belongs to the eIF-3 subunit I family. As to quaternary structure, component of the eukaryotic translation initiation factor 3 (eIF-3) complex.

It is found in the cytoplasm. Its function is as follows. Component of the eukaryotic translation initiation factor 3 (eIF-3) complex, which is involved in protein synthesis of a specialized repertoire of mRNAs and, together with other initiation factors, stimulates binding of mRNA and methionyl-tRNAi to the 40S ribosome. The eIF-3 complex specifically targets and initiates translation of a subset of mRNAs involved in cell proliferation. This chain is Eukaryotic translation initiation factor 3 subunit I (tif34), found in Aspergillus oryzae (strain ATCC 42149 / RIB 40) (Yellow koji mold).